A 441-amino-acid chain; its full sequence is Inositol hexakisphosphate kinase 1 (441 aa).

Residues Glu-100–Ser-175 form a disordered region. Positions Pro-113–His-123 are enriched in basic residues. Over residues Ser-137–Ala-149 the composition is skewed to low complexity. A compositionally biased stretch (basic and acidic residues) spans Lys-150–Ser-160. Ser-151 is modified (phosphoserine). Substrate is bound at residue Pro-220–Gly-228. The segment at Ser-370–Lys-392 is disordered. Over residues Cys-372–Pro-391 the composition is skewed to polar residues.

This sequence belongs to the inositol phosphokinase (IPK) family.

It is found in the cytoplasm. The protein resides in the nucleus. It catalyses the reaction 1D-myo-inositol hexakisphosphate + ATP = 5-diphospho-1D-myo-inositol 1,2,3,4,6-pentakisphosphate + ADP. The enzyme catalyses 1-diphospho-1D-myo-inositol 2,3,4,5,6-pentakisphosphate + ATP + H(+) = 1,5-bis(diphospho)-1D-myo-inositol 2,3,4,6-tetrakisphosphate + ADP. Converts inositol hexakisphosphate (InsP6) to diphosphoinositol pentakisphosphate (InsP7/PP-InsP5). Converts 1,3,4,5,6-pentakisphosphate (InsP5) to PP-InsP4. In Homo sapiens (Human), this protein is Inositol hexakisphosphate kinase 1 (IP6K1).